Here is an 83-residue protein sequence, read N- to C-terminus: Cytochrome b559 subunit alpha (83 aa).

The chain crosses the membrane as a helical span at residues 21–35 (VIHSITIPSLFIAGW). A heme-binding site is contributed by histidine 23.

It belongs to the PsbE/PsbF family. Heterodimer of an alpha subunit and a beta subunit. PSII is composed of 1 copy each of membrane proteins PsbA, PsbB, PsbC, PsbD, PsbE, PsbF, PsbH, PsbI, PsbJ, PsbK, PsbL, PsbM, PsbT, PsbX, PsbY, PsbZ, Psb30/Ycf12, at least 3 peripheral proteins of the oxygen-evolving complex and a large number of cofactors. It forms dimeric complexes. It depends on heme b as a cofactor.

The protein localises to the plastid. The protein resides in the chloroplast thylakoid membrane. This b-type cytochrome is tightly associated with the reaction center of photosystem II (PSII). PSII is a light-driven water:plastoquinone oxidoreductase that uses light energy to abstract electrons from H(2)O, generating O(2) and a proton gradient subsequently used for ATP formation. It consists of a core antenna complex that captures photons, and an electron transfer chain that converts photonic excitation into a charge separation. The polypeptide is Cytochrome b559 subunit alpha (Chlorella vulgaris (Green alga)).